The primary structure comprises 707 residues: Metal transporter CNNM3 (707 aa).

The chain crosses the membrane as a helical span at residues 11–27; sequence LGWLFAALCLGNAAGEA. Residue N73 is glycosylated (N-linked (GlcNAc...) asparagine). The region spanning 130–308 is the CNNM transmembrane domain; that stretch reads EAAPPWALGL…DPYSDLSKGV (179 aa). 3 consecutive transmembrane segments (helical) span residues 193–213, 221–241, and 261–281; these read CALG…AVLL, AVPA…VVPA, and LAVL…ELAA. CBS domains follow at residues 318-379 and 386-452; these read LTPL…CTPL and YNHP…ILDE. A Phosphoserine modification is found at S661. Polar residues predominate over residues 678–691; the sequence is LGEKTTTAAGSSHS. The disordered stretch occupies residues 678–707; that stretch reads LGEKTTTAAGSSHSRPGVPVEGSPGRNPGV. Phosphoserine is present on S700.

The protein belongs to the ACDP family. In terms of tissue distribution, widely expressed. Expressed at higher level in heart and spleen.

The protein localises to the cell membrane. Probable metal transporter. In Homo sapiens (Human), this protein is Metal transporter CNNM3 (CNNM3).